The following is a 67-amino-acid chain: UPF0337 protein Atu4724 (67 aa).

It belongs to the UPF0337 (CsbD) family.

In Agrobacterium fabrum (strain C58 / ATCC 33970) (Agrobacterium tumefaciens (strain C58)), this protein is UPF0337 protein Atu4724.